A 249-amino-acid polypeptide reads, in one-letter code: Exosome complex component Rrp41 (249 aa).

Belongs to the RNase PH family. Rrp41 subfamily. In terms of assembly, component of the archaeal exosome complex. Forms a hexameric ring-like arrangement composed of 3 Rrp41-Rrp42 heterodimers. The hexameric ring associates with a trimer of Rrp4 and/or Csl4 subunits.

It is found in the cytoplasm. Its function is as follows. Catalytic component of the exosome, which is a complex involved in RNA degradation. Has 3'-&gt;5' exoribonuclease activity. Can also synthesize heteromeric RNA-tails. The protein is Exosome complex component Rrp41 of Pyrococcus abyssi (strain GE5 / Orsay).